Here is a 657-residue protein sequence, read N- to C-terminus: Conserved oligomeric Golgi complex subunit 6 (657 aa).

This sequence belongs to the COG6 family. Component of the conserved oligomeric Golgi complex which is composed of eight different subunits and is required for normal Golgi morphology and localization.

It localises to the golgi apparatus membrane. Functionally, required for normal Golgi function. The sequence is that of Conserved oligomeric Golgi complex subunit 6 (COG6) from Homo sapiens (Human).